The following is an 859-amino-acid chain: DNA mismatch repair protein MutS (859 aa).

618 to 625 (GPNMGGKS) contacts ATP.

It belongs to the DNA mismatch repair MutS family.

This protein is involved in the repair of mismatches in DNA. It is possible that it carries out the mismatch recognition step. This protein has a weak ATPase activity. In Shewanella halifaxensis (strain HAW-EB4), this protein is DNA mismatch repair protein MutS.